Reading from the N-terminus, the 276-residue chain is Malectin-A (276 aa).

The N-terminal stretch at 1–26 (MLSIRTVLGPLATILLTVLGPFGAHG) is a signal peptide. At 27–253 (SGLADKVIWA…TPNPYASDNS (227 aa)) the chain is on the lumenal side. A carbohydrate is bound by residues Tyr67, Tyr89, Tyr116, Phe117, and Asp186. Residues 204–247 (PMLQPHPGLEKKEEEEEEEEEEGSTSKKQINKNRVQSGPRTPNP) are disordered. Residues 216 to 226 (EEEEEEEEEEG) are compositionally biased toward acidic residues. The span at 229–247 (SKKQINKNRVQSGPRTPNP) shows a compositional bias: polar residues. An N-linked (GlcNAc...) asparagine glycan is attached at Asn252. The chain crosses the membrane as a helical span at residues 254 to 274 (SLMFPILVAFGVFIPTLFCLC). At 275–276 (RL) the chain is on the cytoplasmic side.

This sequence belongs to the malectin family. Widely expressed throughout development including the anterior neuroectoderm and neural crest at stages 18 and 20, and the retina, hatching gland, otic vesicle, epibranchial placodes, pronephros and tail tip of later states. At stage 41, expressed in the liver, pancreas, branchial arches and proctodeum. Expressed broadly in adults in fat, intestine, gall bladder, eye, muscle, kidney, stomach, liver, heart, pancreas and lung.

Its subcellular location is the endoplasmic reticulum membrane. Functionally, carbohydrate-binding protein with a strong ligand preference for Glc2-N-glycan. May play a role in the early steps of protein N-glycosylation. Can bind di- or higher oligomers but not monomers of glucose, including maltose, maltotriose, maltotetraose, maltoheptaose, nigerose, kojibose, cellobiose and isomaltose, although based on their subcellular locations, these are unlikely to all be physiological ligands. This chain is Malectin-A, found in Xenopus laevis (African clawed frog).